The sequence spans 110 residues: Phosphoribosyl-AMP cyclohydrolase (110 aa).

Mg(2+) is bound at residue D80. Position 81 (C81) interacts with Zn(2+). The Mg(2+) site is built by D82 and D84. Zn(2+)-binding residues include C97 and C104.

This sequence belongs to the PRA-CH family. As to quaternary structure, homodimer. Requires Mg(2+) as cofactor. Zn(2+) is required as a cofactor.

The protein localises to the cytoplasm. The catalysed reaction is 1-(5-phospho-beta-D-ribosyl)-5'-AMP + H2O = 1-(5-phospho-beta-D-ribosyl)-5-[(5-phospho-beta-D-ribosylamino)methylideneamino]imidazole-4-carboxamide. It functions in the pathway amino-acid biosynthesis; L-histidine biosynthesis; L-histidine from 5-phospho-alpha-D-ribose 1-diphosphate: step 3/9. In terms of biological role, catalyzes the hydrolysis of the adenine ring of phosphoribosyl-AMP. This is Phosphoribosyl-AMP cyclohydrolase from Clostridium botulinum (strain 657 / Type Ba4).